The primary structure comprises 370 residues: Histidinol-phosphate aminotransferase (370 aa).

N6-(pyridoxal phosphate)lysine is present on K230.

Belongs to the class-II pyridoxal-phosphate-dependent aminotransferase family. Histidinol-phosphate aminotransferase subfamily. As to quaternary structure, homodimer. Requires pyridoxal 5'-phosphate as cofactor.

It catalyses the reaction L-histidinol phosphate + 2-oxoglutarate = 3-(imidazol-4-yl)-2-oxopropyl phosphate + L-glutamate. It functions in the pathway amino-acid biosynthesis; L-histidine biosynthesis; L-histidine from 5-phospho-alpha-D-ribose 1-diphosphate: step 7/9. The sequence is that of Histidinol-phosphate aminotransferase from Leptospira interrogans serogroup Icterohaemorrhagiae serovar Lai (strain 56601).